Here is a 458-residue protein sequence, read N- to C-terminus: UDP-N-acetylmuramate--L-alanine ligase (458 aa).

ATP is bound at residue 118 to 124 (GTHGKTT).

The protein belongs to the MurCDEF family.

Its subcellular location is the cytoplasm. The enzyme catalyses UDP-N-acetyl-alpha-D-muramate + L-alanine + ATP = UDP-N-acetyl-alpha-D-muramoyl-L-alanine + ADP + phosphate + H(+). It functions in the pathway cell wall biogenesis; peptidoglycan biosynthesis. Functionally, cell wall formation. The polypeptide is UDP-N-acetylmuramate--L-alanine ligase (Clostridium botulinum (strain Kyoto / Type A2)).